The sequence spans 213 residues: Histone H1.3 (213 aa).

Ser-1 is subject to N-acetylserine. Residues 1–15 (SEAPAETAAPAPAEK) are compositionally biased toward low complexity. The tract at residues 1–41 (SEAPAETAAPAPAEKSPAKKKKAAKKPGAGAAKRKAAGPPV) is disordered. Residue Lys-15 is modified to N6-acetyllysine. N6-(beta-hydroxybutyryl)lysine occurs at positions 35 and 53. One can recognise an H15 domain in the interval 37–110 (AGPPVSELIT…GASGSFKLDK (74 aa)). Arg-55 is subject to Citrulline. Residues Lys-65, Lys-86, and Lys-91 each carry the N6-(beta-hydroxybutyryl)lysine modification. Positions 92–213 (GTLVETKGTG…AKKTAAKKKK (122 aa)) are disordered. At Ser-105 the chain carries Phosphoserine. Lys-107 is modified (N6-(beta-hydroxybutyryl)lysine). Residues 107-119 (KLDKKAASGEAKP) are compositionally biased toward basic and acidic residues. 3 stretches are compositionally biased toward basic residues: residues 120-131 (KPKKAGAAKPKK), 138-170 (KKPKKAAGAKKAVKKTPKKAPKPKAAAKPKVAK), and 179-213 (KSPKKAKAVKPKAAKPKAPKPKAAKAKKTAAKKKK).

Belongs to the histone H1/H5 family. H1 histones are progressively phosphorylated during the cell cycle, becoming maximally phosphorylated during late G2 phase and M phase, and being dephosphorylated sharply thereafter. Post-translationally, citrullination at Arg-55 (H1R54ci) by PADI4 takes place within the DNA-binding site of H1 and results in its displacement from chromatin and global chromatin decondensation, thereby promoting pluripotency and stem cell maintenance.

It is found in the nucleus. The protein resides in the chromosome. Its function is as follows. Histones H1 are necessary for the condensation of nucleosome chains into higher-order structures. The polypeptide is Histone H1.3 (Oryctolagus cuniculus (Rabbit)).